Here is a 384-residue protein sequence, read N- to C-terminus: BTB and MATH domain-containing protein 34 (384 aa).

Residues 41–127 (LNGNTTLKRI…ELKFQKEQLK (87 aa)) adopt a coiled-coil conformation. The region spanning 167 to 277 (EFSHTFNSVA…VFNFGEYEEI (111 aa)) is the MATH domain. Positions 317-380 (SDAVMIVKDE…LYGEPALTGR (64 aa)) constitute a BTB domain.

This Caenorhabditis elegans protein is BTB and MATH domain-containing protein 34 (bath-34).